Reading from the N-terminus, the 450-residue chain is Probable malate:quinone oxidoreductase (450 aa).

Belongs to the MQO family. FAD is required as a cofactor.

It catalyses the reaction (S)-malate + a quinone = a quinol + oxaloacetate. It functions in the pathway carbohydrate metabolism; tricarboxylic acid cycle; oxaloacetate from (S)-malate (quinone route): step 1/1. This chain is Probable malate:quinone oxidoreductase, found in Helicobacter pylori (strain P12).